The sequence spans 292 residues: RNA 5'-monophosphate methyltransferase (292 aa).

The disordered stretch occupies residues 1-20; it reads MAVPTELHGGSVKETAAEKE. S-adenosyl-L-methionine contacts are provided by residues Arg46, Asn76, Asp110, 135 to 136, and Met164; that span reads DF. The region spanning 53–274 is the Bin3-type SAM domain; the sequence is ELLRQLFPES…KQTIETHPIP (222 aa).

Belongs to the methyltransferase superfamily. Interacts with DICER1; the interaction may be mediated by RNA.

Its subcellular location is the cytoplasm. It catalyses the reaction a 5'-end 5'-phospho-ribonucleoside-RNA + S-adenosyl-L-methionine = a 5'-end (5'-methylphospho)-ribonucleoside-RNA + S-adenosyl-L-homocysteine. The catalysed reaction is a 5'-end 5'-phospho-ribonucleoside-RNA + 2 S-adenosyl-L-methionine = a 5'-end (5'-bismethylphospho)-ribonucleoside-RNA + 2 S-adenosyl-L-homocysteine. O-methyltransferase that specifically monomethylates 5'-monophosphate of cytoplasmic histidyl tRNA (tRNA(His)), acting as a capping enzyme by protecting tRNA(His) from cleavage by DICER1. Also able, with less efficiently, to methylate the 5' monophosphate of a subset of pre-miRNAs, acting as a negative regulator of miRNA processing. The 5' monophosphate of pre-miRNAs is recognized by DICER1 and is required for pre-miRNAs processing: methylation at this position reduces the processing of pre-miRNAs by DICER1. Was also reported to mediate dimethylation of pre-miR-145; however dimethylation cannot be reproduced by another group which observes a monomethylation of pre-miR-145. The polypeptide is RNA 5'-monophosphate methyltransferase (BCDIN3D) (Pongo abelii (Sumatran orangutan)).